Here is a 132-residue protein sequence, read N- to C-terminus: Large-conductance mechanosensitive channel (132 aa).

3 helical membrane passes run 14 to 34 (VIDL…VSSL), 38 to 58 (IITP…LKIT), and 69 to 89 (FIQT…FVKV).

Belongs to the MscL family. As to quaternary structure, homopentamer.

The protein localises to the cell membrane. Channel that opens in response to stretch forces in the membrane lipid bilayer. May participate in the regulation of osmotic pressure changes within the cell. This Bacillus thuringiensis (strain Al Hakam) protein is Large-conductance mechanosensitive channel.